Reading from the N-terminus, the 408-residue chain is NADH-quinone oxidoreductase subunit D (408 aa).

The protein belongs to the complex I 49 kDa subunit family. As to quaternary structure, NDH-1 is composed of 14 different subunits. Subunits NuoB, C, D, E, F, and G constitute the peripheral sector of the complex.

The protein localises to the cell inner membrane. It carries out the reaction a quinone + NADH + 5 H(+)(in) = a quinol + NAD(+) + 4 H(+)(out). NDH-1 shuttles electrons from NADH, via FMN and iron-sulfur (Fe-S) centers, to quinones in the respiratory chain. The immediate electron acceptor for the enzyme in this species is believed to be ubiquinone. Couples the redox reaction to proton translocation (for every two electrons transferred, four hydrogen ions are translocated across the cytoplasmic membrane), and thus conserves the redox energy in a proton gradient. This chain is NADH-quinone oxidoreductase subunit D, found in Campylobacter jejuni subsp. jejuni serotype O:6 (strain 81116 / NCTC 11828).